Consider the following 391-residue polypeptide: ATP phosphoribosyltransferase regulatory subunit (391 aa).

Belongs to the class-II aminoacyl-tRNA synthetase family. HisZ subfamily. As to quaternary structure, heteromultimer composed of HisG and HisZ subunits.

It is found in the cytoplasm. Its pathway is amino-acid biosynthesis; L-histidine biosynthesis; L-histidine from 5-phospho-alpha-D-ribose 1-diphosphate: step 1/9. Required for the first step of histidine biosynthesis. May allow the feedback regulation of ATP phosphoribosyltransferase activity by histidine. The polypeptide is ATP phosphoribosyltransferase regulatory subunit (Prochlorococcus marinus (strain SARG / CCMP1375 / SS120)).